A 257-amino-acid polypeptide reads, in one-letter code: 5'-nucleotidase SurE (257 aa).

Asp8, Asp9, Ser40, and Asn95 together coordinate a divalent metal cation.

Belongs to the SurE nucleotidase family. A divalent metal cation is required as a cofactor.

Its subcellular location is the cytoplasm. It carries out the reaction a ribonucleoside 5'-phosphate + H2O = a ribonucleoside + phosphate. Functionally, nucleotidase that shows phosphatase activity on nucleoside 5'-monophosphates. The sequence is that of 5'-nucleotidase SurE from Desulfovibrio desulfuricans (strain ATCC 27774 / DSM 6949 / MB).